Reading from the N-terminus, the 166-residue chain is Nucleotide-binding protein CV_2047 (166 aa).

Belongs to the YajQ family.

In terms of biological role, nucleotide-binding protein. In Chromobacterium violaceum (strain ATCC 12472 / DSM 30191 / JCM 1249 / CCUG 213 / NBRC 12614 / NCIMB 9131 / NCTC 9757 / MK), this protein is Nucleotide-binding protein CV_2047.